We begin with the raw amino-acid sequence, 305 residues long: MSAIDKEAVKQFLLSLQDSICQQLEQADGTALFEEDAWQREPGERLGGGGRTRVMTNGAVFEQGGVNFSHVAGKAMPASATAHRPELAGRKFEAMGVSLVIHPKNPYIPTSHANVRFFIAEKEGEDPIWWFGGGFDLTPFYPVDEDCQSWHQTAKDLCAPFGDDVYQEHKEWCDKYFYLPHRDETRGVGGLFFDDLNEWGFEKSFAYMQAVGEGFAAAYLPIVERRKETPYGERERDFQLYRRGRYVEFNLVYDRGTLFGLQSGGRTESILMSMPPLARWEYRYEPQACSPEALLYSDYLKPRVW.

Ser98 is a binding site for substrate. A divalent metal cation-binding residues include His102 and His112. The active-site Proton donor is the His112. A substrate-binding site is contributed by 114-116 (NVR). A divalent metal cation is bound by residues His151 and His181. An important for dimerization region spans residues 246–281 (YVEFNLVYDRGTLFGLQSGGRTESILMSMPPLARWE). 264 to 266 (GGR) is a substrate binding site.

Belongs to the aerobic coproporphyrinogen-III oxidase family. Homodimer. A divalent metal cation serves as cofactor.

The protein localises to the cytoplasm. The catalysed reaction is coproporphyrinogen III + O2 + 2 H(+) = protoporphyrinogen IX + 2 CO2 + 2 H2O. Its pathway is porphyrin-containing compound metabolism; protoporphyrin-IX biosynthesis; protoporphyrinogen-IX from coproporphyrinogen-III (O2 route): step 1/1. In terms of biological role, involved in the heme biosynthesis. Catalyzes the aerobic oxidative decarboxylation of propionate groups of rings A and B of coproporphyrinogen-III to yield the vinyl groups in protoporphyrinogen-IX. The polypeptide is Oxygen-dependent coproporphyrinogen-III oxidase (Vibrio atlanticus (strain LGP32) (Vibrio splendidus (strain Mel32))).